The following is a 1652-amino-acid chain: Venom factor (1652 aa).

An N-terminal signal peptide occupies residues 1-22 (MEGMALYLVAALLIGFPASSFG). Positions 519, 542, 543, and 545 each coordinate Mg(2+). Cystine bridges form between Cys547–Cys808, Cys616–Cys651, Cys684–Cys711, Cys685–Cys718, Cys698–Cys719, Cys864–Cys1502, Cys1347–Cys1478, Cys1378–Cys1447, Cys1495–Cys1500, Cys1507–Cys1579, Cys1526–Cys1650, and Cys1626–Cys1635. Positions 657-740 (RRRRRSVVLL…REDELFLARS (84 aa)) are excised as a propeptide. Residues 661–739 (RSVVLLDSKA…KREDELFLAR (79 aa)) are C3a-like domain. The region spanning 684 to 719 (CCEDGMHENPMGYSCEKREKYIQEGDACKAAFLECC) is the Anaphylatoxin-like domain. The tract at residues 743-754 (EDEFFGEDNIIS) is factor B binding site. The propeptide occupies 992–1270 (HLIITPSGCG…VVGFQGLAEY (279 aa)). The tract at residues 992-1270 (HLIITPSGCG…VVGFQGLAEY (279 aa)) is C3d-like domain. A cross-link (isoglutamyl cysteine thioester (Cys-Gln)) is located at residues 1000 to 1003 (CGEQ). The interval 1197 to 1260 (VLMAASTERN…GGTYGQTQAT (64 aa)) is factor H binding site. In terms of domain architecture, NTR spans 1507 to 1650 (CSLLNQQKKI…LSNTLTIFGC (144 aa)).

This sequence belongs to the venom complement C3 homolog family. In terms of assembly, heterotrimer of alpha, beta and gamma chains; disulfide-linked. Is active with factor B in the presence of factor D. Post-translationally, first processed by the removal of 4 Arg residues by furin-type protease, forming two chains, alpha and gamma/beta precursor, linked by a disulfide bond. Probably, a cobrin-like protease cleaves the C3a-like domain and then the C3d-like domain, generating the mature venom factor (VF). Expressed by the venom gland.

It is found in the secreted. In terms of biological role, complement-activating protein in venom. It is a structural and functional analog of complement component C3b, the activated form of C3. It binds factor B (CFB), which is subsequently cleaved by factor D (CFD) to form the bimolecular complex VF/Bb. VF/Bb is a C3/C5 convertase that cleaves both complement components C3 and C5. Structurally, it resembles the C3b degradation product C3c, which is not able to form a C3/C5 convertase. Unlike C3b/Bb, VF/Bb is a stable complex and completely resistant to the actions of complement regulatory factors H (CFH) and I (CFI). Therefore, VF continuously activates complement resulting in the depletion of complement activity. The protein is Venom factor of Crotalus adamanteus (Eastern diamondback rattlesnake).